A 636-amino-acid chain; its full sequence is MGRLLDTIDSPTDLKKVPVEQLPALCQEIREQIIQTCARNGGHLGSSLGAVEINVALHHVFSSPQDKLVWDVGHQAYAHKLLTGRREAFRTIRTEGGLAGFPERHESAHDAFGVGHASTAISAALGMIEAKRVTGEPGKVVAVVGDGAMTGGVAFEGLNQAGYLGRNLLVVLNDNEMSISPNVGALSEWFSKKFASRTYNRWRRQVKEFLESVPKGPEAIEIIRHGINATKALVTPGILFEGLGFHYVGPVDGHDVKGLVETFQKLAIFDGPVLLHAITTKGKGYHPAESDKATRGHGLSFFDVATGKPVKKSPGAKAYTDLFAEALCEEMEHDPRVVAITAAMLEGTGLIKAKQRFPDRTYDVGIAEQHAVTFAAGLACEGIRPVVAIYSTFLQRAYDQIIHDVALQKLPVTFALDRGGLVGADGKTHQGAFDLAYLRCVPGLVVMAPSDENELRHMLHTSLQHDGPAALRYPRGAGEGVALEPARVLEIGKGRLARNVPGKPDVCVVAAGTTLKAALAAAEALAAEGVAATVVDPRFVKPLDEELICAEAGRAKRVVTVEEGCLAGGFGTACLEAFERRGLLEAGLGVRRLGIPDEFITHAEQAKQRAWVGIDADAIAAACRALVGDRKARGVA.

Thiamine diphosphate is bound by residues histidine 74 and 115–117 (GHA). Aspartate 146 serves as a coordination point for Mg(2+). Residues 147-148 (GA), asparagine 175, tyrosine 285, and glutamate 368 each bind thiamine diphosphate. Mg(2+) is bound at residue asparagine 175.

It belongs to the transketolase family. DXPS subfamily. Homodimer. Mg(2+) serves as cofactor. Thiamine diphosphate is required as a cofactor.

The enzyme catalyses D-glyceraldehyde 3-phosphate + pyruvate + H(+) = 1-deoxy-D-xylulose 5-phosphate + CO2. The protein operates within metabolic intermediate biosynthesis; 1-deoxy-D-xylulose 5-phosphate biosynthesis; 1-deoxy-D-xylulose 5-phosphate from D-glyceraldehyde 3-phosphate and pyruvate: step 1/1. In terms of biological role, catalyzes the acyloin condensation reaction between C atoms 2 and 3 of pyruvate and glyceraldehyde 3-phosphate to yield 1-deoxy-D-xylulose-5-phosphate (DXP). This is 1-deoxy-D-xylulose-5-phosphate synthase from Anaeromyxobacter dehalogenans (strain 2CP-1 / ATCC BAA-258).